The sequence spans 458 residues: ATP synthase subunit beta (458 aa).

148–155 (GGAGVGKT) is a binding site for ATP.

Belongs to the ATPase alpha/beta chains family. As to quaternary structure, F-type ATPases have 2 components, CF(1) - the catalytic core - and CF(0) - the membrane proton channel. CF(1) has five subunits: alpha(3), beta(3), gamma(1), delta(1), epsilon(1). CF(0) has three main subunits: a(1), b(2) and c(9-12). The alpha and beta chains form an alternating ring which encloses part of the gamma chain. CF(1) is attached to CF(0) by a central stalk formed by the gamma and epsilon chains, while a peripheral stalk is formed by the delta and b chains.

It is found in the cell inner membrane. The enzyme catalyses ATP + H2O + 4 H(+)(in) = ADP + phosphate + 5 H(+)(out). In terms of biological role, produces ATP from ADP in the presence of a proton gradient across the membrane. The catalytic sites are hosted primarily by the beta subunits. This Francisella philomiragia subsp. philomiragia (strain ATCC 25017 / CCUG 19701 / FSC 153 / O#319-036) protein is ATP synthase subunit beta.